A 325-amino-acid chain; its full sequence is BES1/BZR1 homolog protein 4 (325 aa).

The segment at 1 to 21 is disordered; sequence MTSGTRMPTWRERENNKRRER. Residues 6–89 are required for DNA-binding; it reads RMPTWREREN…RMEIGGGSAT (84 aa). Thr169 carries the post-translational modification Phosphothreonine. Residues 304–325 are disordered; sequence ERIHEESGSDDLELTLGNSSTR.

This sequence belongs to the BZR/LAT61 family. Post-translationally, phosphorylated. Phosphorylation increases protein degradation.

This is BES1/BZR1 homolog protein 4 (BEH4) from Arabidopsis thaliana (Mouse-ear cress).